Here is a 776-residue protein sequence, read N- to C-terminus: GATOR2 complex protein Wdr24 (776 aa).

6 WD repeats span residues 63-103 (NLSY…RQKQ), 109-149 (EHER…SINT), 152-192 (CNSE…KCMV), 196-235 (AHYGPVYTCDWHPTRNWLATGSRDKQIKVWNMDGRPGLEH), 238-280 (HTIA…IPFA), and 284-326 (EHTN…ALKA). The disordered stretch occupies residues 466-490 (HRSSFSNQKNPMNSRRATQVASDWP). The segment covering 469-490 (SFSNQKNPMNSRRATQVASDWP) has biased composition (polar residues). The C4-type zinc finger occupies 703–726 (NCGECGRPMGGKVGWYCDKCKSMQ). Zn(2+)-binding residues include C704, C707, C719, C722, C730, C733, C744, C747, H749, H752, H755, C766, C769, H771, and C773. The segment at 728–776 (AKCCVCGLIVRGVYAWCQGCSHGGHIEHLQKYFAKHSKCPKCGHLCAYS) adopts an RING-type; atypical zinc-finger fold.

It belongs to the WD repeat WDR24 family. Component of the GATOR complex consisting of mio, Nup44A/Seh1, Im11, Nplr3, Nplr2, Wdr24, Wdr59 and Sec13. Within the GATOR complex, probable component of the GATOR2 subcomplex which is likely composed of mio, Nup44A/Seh1, Wdr24, Wdr59 and Sec13. Interacts with Nup44A/Seh1. Interacts with mio. Interacts with Nplr3. The GATOR2 complex associates with unmet in the absence of S-adenosyl-L-methionine; the mio-Wdr24-Nup44A subcomplex is essential and sufficient for this interaction while Wdr59 and Sec13 are dispensable. This association acts as a nutrient sensor to inhibit mTORC1 signaling in the absence of methionine.

It localises to the lysosome. Its subcellular location is the cytoplasmic vesicle. The protein localises to the autophagosome. The catalysed reaction is S-ubiquitinyl-[E2 ubiquitin-conjugating enzyme]-L-cysteine + [acceptor protein]-L-lysine = [E2 ubiquitin-conjugating enzyme]-L-cysteine + N(6)-ubiquitinyl-[acceptor protein]-L-lysine.. It participates in protein modification; protein ubiquitination. An essential component of the GATOR subcomplex GATOR2 which functions as an activator of the amino acid-sensing branch of the mTORC1 signaling pathway. The two GATOR subcomplexes, GATOR1 and GATOR2, regulate the mTORC1 pathway in order to mediate metabolic homeostasis, female gametogenesis and the response to amino acid limitation and complete starvation. GATOR2 activates the mTORC1 signaling pathway through the inhibition of the GATOR1 subcomplex, controlling the switch to cell proliferation and growth under nutrient replete conditions and during female oocyte development. GATOR2 probably acts as an E3 ubiquitin-protein ligase toward GATOR1. In the presence of abundant amino acids, the GATOR2 complex mediates ubiquitination of components of the GATOR1 complex, leading to GATOR1 inactivation. This GATOR2 component is required for activating mTORC1 and promoting cell growth in both germline and somatic cells. In addition to its role in regulation of the mTORC1 complex, functions independently of mTORC1 to promote the acidification of lysosomes and facilitates autophagic flux. In Drosophila melanogaster (Fruit fly), this protein is GATOR2 complex protein Wdr24.